A 380-amino-acid chain; its full sequence is Cytochrome b (380 aa).

A run of 4 helical transmembrane segments spans residues 34 to 54 (FGSLLGICLMTQIITGLLLAM), 78 to 99 (WLIRNLHANGASFFFICIYLHI), 114 to 134 (WNIGVILPPTLMATAFVGYVL), and 179 to 199 (FFALHFLLLFVTVGLTLVHLT). Heme b contacts are provided by histidine 84 and histidine 98. The heme b site is built by histidine 183 and histidine 197. Residue histidine 202 coordinates a ubiquinone. 4 consecutive transmembrane segments (helical) span residues 227–247 (IKDMLGFALMLILLATMALFS), 289–309 (LGGVLALAASVLVLFLVPLLH), 321–341 (LLPFLFWTLVANLLILTWVGS), and 348–368 (FIIIGQVASFTYFTXILVLFP).

This sequence belongs to the cytochrome b family. The cytochrome bc1 complex contains 11 subunits: 3 respiratory subunits (MT-CYB, CYC1 and UQCRFS1), 2 core proteins (UQCRC1 and UQCRC2) and 6 low-molecular weight proteins (UQCRH/QCR6, UQCRB/QCR7, UQCRQ/QCR8, UQCR10/QCR9, UQCR11/QCR10 and a cleavage product of UQCRFS1). This cytochrome bc1 complex then forms a dimer. Requires heme b as cofactor.

Its subcellular location is the mitochondrion inner membrane. Component of the ubiquinol-cytochrome c reductase complex (complex III or cytochrome b-c1 complex) that is part of the mitochondrial respiratory chain. The b-c1 complex mediates electron transfer from ubiquinol to cytochrome c. Contributes to the generation of a proton gradient across the mitochondrial membrane that is then used for ATP synthesis. The protein is Cytochrome b (MT-CYB) of Gymnorhina tibicen (Australian magpie).